The primary structure comprises 101 residues: Large ribosomal subunit protein uL24 (101 aa).

Belongs to the universal ribosomal protein uL24 family. Part of the 50S ribosomal subunit.

Functionally, one of two assembly initiator proteins, it binds directly to the 5'-end of the 23S rRNA, where it nucleates assembly of the 50S subunit. In terms of biological role, one of the proteins that surrounds the polypeptide exit tunnel on the outside of the subunit. In Dinoroseobacter shibae (strain DSM 16493 / NCIMB 14021 / DFL 12), this protein is Large ribosomal subunit protein uL24.